The primary structure comprises 1190 residues: Wings apart-like protein homolog (1190 aa).

Disordered regions lie at residues methionine 1–valine 23 and glutamine 46–leucine 82. The segment at methionine 1 to glutamate 659 is mediates interaction with the cohesin complex. A compositionally biased stretch (basic and acidic residues) spans aspartate 54–glutamate 66. The short motif at phenylalanine 73–phenylalanine 75 is the FGF motif 1 element. Position 77 is a phosphoserine (serine 77). At lysine 168 the chain carries N6-acetyllysine. Phosphoserine occurs at positions 221, 223, and 226. Residues leucine 260–serine 286 adopt a coiled-coil conformation. Residues serine 347 and serine 380 each carry the phosphoserine modification. The FGF motif 2 motif lies at phenylalanine 429–phenylalanine 431. Serine 443 bears the Phosphoserine mark. The short motif at phenylalanine 453 to phenylalanine 455 is the FGF motif 3 element. Residues serine 459 and serine 461 each carry the phosphoserine modification. Residues serine 459–cysteine 469 are compositionally biased toward acidic residues. The tract at residues serine 459–alanine 553 is disordered. The segment covering serine 494–glutamate 509 has biased composition (polar residues). Over residues glutamine 531–arginine 540 the composition is skewed to basic and acidic residues. A WAPL domain is found at arginine 626–threonine 1169. The stretch at glutamate 749–lysine 782 forms a coiled coil. Serine 904 carries the post-translational modification Phosphoserine.

The protein belongs to the WAPL family. Interacts with the cohesin complex throughout the cell cycle; interacts with both chromatin-bound and soluble pools of the complex. Interacts with RAD21; the interaction is direct. Interacts with PDS5A; the interaction is direct, cohesin-dependent and competitive with CDCA5/SORORIN. Interacts (via FGF motifs) with PDS5B; the interaction is direct. Interacts with a SMC1 protein (SMC1A or SMC1B) and SMC3. In terms of assembly, (Microbial infection) Isoform 2 interacts with Epstein-Barr virus EBNA2. Deubiquitinated by USP37; leading to stabilization. As to expression, isoform 1 is highly expressed in uterine cervix tumor. Isoform 2 is widely expressed with a high level in skeletal muscle and heart.

It is found in the nucleus. The protein resides in the chromosome. The protein localises to the cytoplasm. Regulator of sister chromatid cohesion in mitosis which negatively regulates cohesin association with chromatin. Involved in both sister chromatid cohesion during interphase and sister-chromatid resolution during early stages of mitosis. Couples DNA replication to sister chromatid cohesion. Cohesion ensures that chromosome partitioning is accurate in both meiotic and mitotic cells and plays an important role in DNA repair. This Homo sapiens (Human) protein is Wings apart-like protein homolog.